We begin with the raw amino-acid sequence, 223 residues long: Uracil-DNA glycosylase (223 aa).

D67 serves as the catalytic Proton acceptor.

Belongs to the uracil-DNA glycosylase (UDG) superfamily. UNG family.

The protein localises to the cytoplasm. It catalyses the reaction Hydrolyzes single-stranded DNA or mismatched double-stranded DNA and polynucleotides, releasing free uracil.. Excises uracil residues from the DNA which can arise as a result of misincorporation of dUMP residues by DNA polymerase or due to deamination of cytosine. This chain is Uracil-DNA glycosylase, found in Borrelia duttonii (strain Ly).